Here is a 692-residue protein sequence, read N- to C-terminus: Elongation factor G (692 aa).

Residues 8-283 (EDYRNFGIMA…AVVDYLPSPV (276 aa)) enclose the tr-type G domain. Residues 17–24 (AHIDAGKT), 81–85 (DTPGH), and 135–138 (NKMD) each bind GTP.

It belongs to the TRAFAC class translation factor GTPase superfamily. Classic translation factor GTPase family. EF-G/EF-2 subfamily.

The protein localises to the cytoplasm. Its function is as follows. Catalyzes the GTP-dependent ribosomal translocation step during translation elongation. During this step, the ribosome changes from the pre-translocational (PRE) to the post-translocational (POST) state as the newly formed A-site-bound peptidyl-tRNA and P-site-bound deacylated tRNA move to the P and E sites, respectively. Catalyzes the coordinated movement of the two tRNA molecules, the mRNA and conformational changes in the ribosome. The polypeptide is Elongation factor G (Caulobacter vibrioides (strain ATCC 19089 / CIP 103742 / CB 15) (Caulobacter crescentus)).